Reading from the N-terminus, the 369-residue chain is Probable L-tyrosine/L-aspartate decarboxylase (369 aa).

At Lys-224 the chain carries N6-(pyridoxal phosphate)lysine.

It belongs to the group II decarboxylase family. MfnA subfamily. The cofactor is pyridoxal 5'-phosphate.

The catalysed reaction is L-tyrosine + H(+) = tyramine + CO2. The enzyme catalyses L-aspartate + H(+) = beta-alanine + CO2. It participates in cofactor biosynthesis; methanofuran biosynthesis. It functions in the pathway cofactor biosynthesis; coenzyme A biosynthesis. Its function is as follows. Catalyzes the decarboxylation of L-tyrosine to produce tyramine for methanofuran biosynthesis. Can also catalyze the decarboxylation of L-aspartate to produce beta-alanine for coenzyme A (CoA) biosynthesis. The polypeptide is Probable L-tyrosine/L-aspartate decarboxylase (Methanospirillum hungatei JF-1 (strain ATCC 27890 / DSM 864 / NBRC 100397 / JF-1)).